A 94-amino-acid chain; its full sequence is Small ribosomal subunit protein uS19 (94 aa).

It belongs to the universal ribosomal protein uS19 family.

Its function is as follows. Protein S19 forms a complex with S13 that binds strongly to the 16S ribosomal RNA. The polypeptide is Small ribosomal subunit protein uS19 (Halothermothrix orenii (strain H 168 / OCM 544 / DSM 9562)).